The chain runs to 1831 residues: Transmembrane protein 131 homolog (1831 aa).

The N-terminal stretch at 1–29 is a signal peptide; it reads MVPSIHKTSNRYRTIYFFLISLLITSTFA. Over 30–1169 the chain is Lumenal; the sequence is DQQAWPLPEE…QALPRPPFEN (1140 aa). A papD-L domain region spans residues 118–294; the sequence is EMDPPMMDFG…QSKQIATLVL (177 aa). A helical transmembrane segment spans residues 1170-1190; the sequence is IMYYSCVTALIFCLVCVLACA. Residues 1191 to 1831 are Cytoplasmic-facing; that stretch reads YLEGDRAIAV…TDNENDEKNN (641 aa). Residues 1223–1234 are compositionally biased toward low complexity; that stretch reads STTTPVPTVPST. 4 disordered regions span residues 1223 to 1252, 1325 to 1516, 1663 to 1759, and 1800 to 1831; these read STTT…RPST, GQQK…PTDD, QMKR…VSNP, and WSSS…EKNN. Over residues 1338–1349 the composition is skewed to acidic residues; sequence PEFDEVEEEELA. 2 stretches are compositionally biased toward low complexity: residues 1394–1407 and 1435–1448; these read PIIV…PPVQ and QVPP…TPKT. Over residues 1455-1467 the composition is skewed to basic and acidic residues; sequence EPEKPIKPSEQKK. Residues 1480-1497 show a composition bias toward polar residues; that stretch reads TPSKARTPSKTPSQSNRA. A compositionally biased stretch (low complexity) spans 1500 to 1514; it reads PASSPAPIAPTSAPT. Composition is skewed to polar residues over residues 1669 to 1687, 1702 to 1733, and 1742 to 1758; these read SPSQ…SPQK, NQSS…NSIQ, and WGDN…TVSN. Low complexity predominate over residues 1808–1820; it reads PPTQQPSTSQMPQ. Over residues 1822–1831 the composition is skewed to acidic residues; sequence TDNENDEKNN.

It belongs to the TMEM131 family. As to quaternary structure, may interact (via PapD-L domain) with collagen proteins (via C-terminus); the interaction is direct and is involved in assembly and secretion of collagen. Predominantly expressed in the intestine and hypodermis.

Its subcellular location is the membrane. It is found in the endoplasmic reticulum membrane. Its function is as follows. Collagen binding transmembrane protein involved in collagen secretion, probably by recruiting the ER-to-Golgi transport complex TRAPPIII. Required for normal development. This is Transmembrane protein 131 homolog from Caenorhabditis elegans.